Reading from the N-terminus, the 250-residue chain is HTH-type transcriptional regulator KipR (250 aa).

Residues 5 to 65 enclose the HTH iclR-type domain; that stretch reads NKTVVKSMAL…DASGAYSLGL (61 aa). A DNA-binding region (H-T-H motif) is located at residues 26–45; that stretch reads LSELVSLTGMPKTSVHRMVS. The region spanning 80 to 249 is the IclR-ED domain; sequence IRKIAKPVME…ALQISRKIGY (170 aa).

Its function is as follows. Transcriptional repressor of the kip gene-containing operon. The protein is HTH-type transcriptional regulator KipR (kipR) of Bacillus subtilis (strain 168).